The chain runs to 1020 residues: Carbamoyl phosphate synthase arginine-specific large chain (1020 aa).

The carboxyphosphate synthetic domain stretch occupies residues 1–401 (MPKNNAIHSI…ATLKAIASLE (401 aa)). Residues Arg-129, Arg-169, Gly-175, Gly-176, Gln-208, Ile-210, Glu-215, Gly-241, Ile-242, His-243, Gln-284, and Glu-298 each contribute to the ATP site. One can recognise an ATP-grasp 1 domain in the interval 133–327 (KTLMKRLHQP…IAKIAADIAI (195 aa)). Residues Gln-284, Glu-298, and Asn-300 each coordinate Mg(2+). Gln-284, Glu-298, and Asn-300 together coordinate Mn(2+). Oligomerization domain regions lie at residues 402-542 (IDPK…FGQT) and 402-544 (IDPK…QTNE). 2 carbamoyl phosphate synthetic domain regions span residues 543–927 (NESH…ADSY) and 544–927 (ESHP…ADSY). Residues 669–858 (ADCLRLLKIA…LAQLATRLIL (190 aa)) enclose the ATP-grasp 2 domain. Residues Arg-705, Gln-744, Leu-746, Glu-750, Gly-775, Val-776, His-777, Ser-778, and Gln-818 each contribute to the ATP site. Mg(2+)-binding residues include Gln-818 and Asn-831. 2 residues coordinate Mn(2+): Gln-818 and Asn-831. The region spanning 927–1020 (YHLETWQTVD…LAVTPTPATI (94 aa)) is the MGS-like domain. Positions 928–1020 (HLETWQTVDG…LAVTPTPATI (93 aa)) are allosteric domain.

Belongs to the CarB family. In terms of assembly, composed of two chains; the small (or glutamine) chain promotes the hydrolysis of glutamine to ammonia, which is used by the large (or ammonia) chain to synthesize carbamoyl phosphate. Tetramer of heterodimers (alpha,beta)4. Mg(2+) is required as a cofactor. Requires Mn(2+) as cofactor.

It catalyses the reaction hydrogencarbonate + L-glutamine + 2 ATP + H2O = carbamoyl phosphate + L-glutamate + 2 ADP + phosphate + 2 H(+). The enzyme catalyses hydrogencarbonate + NH4(+) + 2 ATP = carbamoyl phosphate + 2 ADP + phosphate + 2 H(+). It functions in the pathway amino-acid biosynthesis; L-arginine biosynthesis; carbamoyl phosphate from bicarbonate: step 1/1. Functionally, large subunit of the glutamine-dependent carbamoyl phosphate synthetase (CPSase). CPSase catalyzes the formation of carbamoyl phosphate from the ammonia moiety of glutamine, carbonate, and phosphate donated by ATP, constituting the first step of the biosynthetic pathway leading to arginine and/or urea. The large subunit (synthetase) binds the substrates ammonia (free or transferred from glutamine from the small subunit), hydrogencarbonate and ATP and carries out an ATP-coupled ligase reaction, activating hydrogencarbonate by forming carboxy phosphate which reacts with ammonia to form carbamoyl phosphate. The sequence is that of Carbamoyl phosphate synthase arginine-specific large chain from Lactiplantibacillus plantarum (strain ATCC BAA-793 / NCIMB 8826 / WCFS1) (Lactobacillus plantarum).